The primary structure comprises 292 residues: 2-(5''-triphosphoribosyl)-3'-dephosphocoenzyme-A synthase (292 aa).

This sequence belongs to the CitG/MdcB family.

It catalyses the reaction 3'-dephospho-CoA + ATP = 2'-(5''-triphospho-alpha-D-ribosyl)-3'-dephospho-CoA + adenine. In terms of biological role, catalyzes the formation of 2-(5''-triphosphoribosyl)-3'-dephosphocoenzyme-A, the precursor of the prosthetic group of the holo-acyl carrier protein (gamma chain) of citrate lyase, from ATP and dephospho-CoA. In Escherichia coli O139:H28 (strain E24377A / ETEC), this protein is 2-(5''-triphosphoribosyl)-3'-dephosphocoenzyme-A synthase.